Here is a 430-residue protein sequence, read N- to C-terminus: GTPase Obg (430 aa).

Positions 1 to 158 (MFVDQVKISL…LEVTLELKLL (158 aa)) constitute an Obg domain. The tract at residues 118–145 (RGGRGGRGNSRFATPRNPAPDFSENGEP) is disordered. Residues 159 to 329 (ADVGLVGFPS…LLYQIADKLE (171 aa)) enclose the OBG-type G domain. GTP is bound by residues 165–172 (GFPSVGKS), 190–194 (FTTIK), 212–215 (DLPG), 282–285 (NKMD), and 310–312 (STI). Positions 172 and 192 each coordinate Mg(2+). The region spanning 352–430 (KHTPSADKFT…ILGGEFEFVE (79 aa)) is the OCT domain.

Belongs to the TRAFAC class OBG-HflX-like GTPase superfamily. OBG GTPase family. As to quaternary structure, monomer. Requires Mg(2+) as cofactor.

Its subcellular location is the cytoplasm. Functionally, an essential GTPase which binds GTP, GDP and possibly (p)ppGpp with moderate affinity, with high nucleotide exchange rates and a fairly low GTP hydrolysis rate. Plays a role in control of the cell cycle, stress response, ribosome biogenesis and in those bacteria that undergo differentiation, in morphogenesis control. This is GTPase Obg from Staphylococcus epidermidis (strain ATCC 35984 / DSM 28319 / BCRC 17069 / CCUG 31568 / BM 3577 / RP62A).